The primary structure comprises 317 residues: MPVFKAPFNGYSVKFSPFYESRLAVATAQNFGILGNGRIHVLELAPGAPGVTESVSYDTADAVYDVCWSESHDSVLIAAIGDGSVKIYDTALPPPSNPIRSFQEHAREVQSVDYNPTRRDSFLTSSWDDTVKLWAMDRPASVRTFKEHAYCVYQAVWNPKHGDVFASASGDCTLRIWDVREPGSTMIIPAHDFEILSCDWNKYDDCILATSSVDKTVKVWDVRSYRVPLAVLNGHGYAVRKVKFSPHRRSLIASCSYDMSVCLWDYMVEDALVGRYDHHTEFAVGIDMSVLVEGLMASTGWDELVYVWQQGMDPRAS.

WD repeat units follow at residues aspartate 58–proline 98, glutamate 104–threonine 144, glutamate 147–isoleucine 187, alanine 190–alanine 230, glycine 234–glycine 274, and histidine 278–serine 317.

It belongs to the WD repeat peroxin-7 family. As to quaternary structure, interacts with PEX5; interaction only takes place when PEX7 is associated with cargo proteins. Interacts with PEX13 (via N-terminus) and PEX12 (via C-terminus), but not with PEX14. In terms of tissue distribution, expressed in siliques and leaves, but barely detectable in flowers, stems and roots.

Its subcellular location is the cytoplasm. It is found in the cytosol. The protein resides in the peroxisome matrix. Receptor required for the peroxisomal import of proteins containing a C-terminal PTS2-type peroxisomal targeting signal. Specifically binds to cargo proteins containing a PTS2 peroxisomal targeting signal in the cytosol. Cargo protein-binding triggers interaction with PEX5 and formation of a ternary complex composed of PEX5 and PEX7 along with PTS2-containing cargo proteins, which is tranlocated into peroxisomes by passing through the PEX13-PEX14 docking complex. The protein is Peroxisome biogenesis protein 7 (PEX7) of Arabidopsis thaliana (Mouse-ear cress).